Consider the following 137-residue polypeptide: uncharacterized protein (137 aa).

A helical membrane pass occupies residues 20–42 (TVLAFKGEGALALAGLLVMAAVA).

The protein localises to the host membrane. This is an uncharacterized protein from Dryophytes versicolor (chameleon treefrog).